Here is a 661-residue protein sequence, read N- to C-terminus: Arginine--tRNA ligase, cytoplasmic (661 aa).

An N-acetylmethionine modification is found at M1. Residues 1–73 form a could be involved in the assembly of the multisynthetase complex region; sequence MDGLVAQCSA…AEKRRRPTKN (73 aa). Residues 201–203, H212, Y385, D389, and Q413 each bind L-arginine; that span reads SPN. The 'HIGH' region signature appears at 202 to 213; it reads PNIAKEMHVGHL. Residues 530-544 are interaction with tRNA; that stretch reads NTAAYLLYAFTRIRS.

It belongs to the class-I aminoacyl-tRNA synthetase family. In terms of assembly, interacts (via N-terminus) with AIMP1 (via N-terminus); this stimulates its catalytic activity. Interacts (via N-terminus) with LARS2 (via C-terminus). Monomer. Part of a multisubunit complex that groups tRNA ligases for Arg (RARS1), Asp (DARS1), Gln (QARS1), Ile (IARS1), Leu (LARS1), Lys (KARS1), Met (MARS1) the bifunctional ligase for Glu and Pro (EPRS1) and the auxiliary subunits AIMP1/p43, AIMP2/p38 and EEF1E1/p18. Interacts with QARS1. Part of a complex composed of RARS1, QARS1 and AIMP1.

The protein resides in the cytoplasm. It is found in the cytosol. The enzyme catalyses tRNA(Arg) + L-arginine + ATP = L-arginyl-tRNA(Arg) + AMP + diphosphate. Its function is as follows. Forms part of a macromolecular complex that catalyzes the attachment of specific amino acids to cognate tRNAs during protein synthesis. Modulates the secretion of AIMP1 and may be involved in generation of the inflammatory cytokine EMAP2 from AIMP1. The sequence is that of Arginine--tRNA ligase, cytoplasmic (RARS1) from Cricetulus griseus (Chinese hamster).